Reading from the N-terminus, the 87-residue chain is Mitochondrial import protein 2 (87 aa).

At 1–53 (MADSEDTSVILQGIDTINSVEGLEEDGYLSDEDTSLSNELADAQRQWEESLQQ) the chain is on the cytoplasmic side. Residues 54–71 (LNKLLNWVLLPLLGKYIG) traverse the membrane as a helical segment. Residues 72–87 (RRMAKTLWSRFIEHFV) are Mitochondrial intermembrane-facing.

This sequence belongs to the MIM2 family. Component of the MIM complex containing at least MIM1 and MIM2. Interacts with MIM1; interaction is direct.

It is found in the mitochondrion outer membrane. Component of the MIM complex required for outer membrane protein import. Involved in import of the subset of proteins with multiple alpha-helical transmembrane segments, including UGO1, TOM20 and FZO1. The protein is Mitochondrial import protein 2 of Saccharomyces cerevisiae (strain ATCC 204508 / S288c) (Baker's yeast).